The primary structure comprises 140 residues: Large ribosomal subunit protein uL11 (140 aa).

This sequence belongs to the universal ribosomal protein uL11 family. As to quaternary structure, part of the ribosomal stalk of the 50S ribosomal subunit. Interacts with L10 and the large rRNA to form the base of the stalk. L10 forms an elongated spine to which L12 dimers bind in a sequential fashion forming a multimeric L10(L12)X complex. In terms of processing, one or more lysine residues are methylated.

Its function is as follows. Forms part of the ribosomal stalk which helps the ribosome interact with GTP-bound translation factors. The polypeptide is Large ribosomal subunit protein uL11 (Brachyspira hyodysenteriae (strain ATCC 49526 / WA1)).